Consider the following 192-residue polypeptide: MAFVAIEGIDGSGKSTVISLLEKKLPRVYATREPSSGPIGRLIKEWALKGGSVDPHVDALLFAADRIEHYKREIEPRVREGYIVISERYIESSIAYQGAAGVSREFVKYINSLVPKPDLTIILDVDPSIAEARIRQRGGAEKYEYLSFLRKVREIYLARAAEEGYPVIDASRRPEEVAADVAELIKRVVRFK.

An ATP-binding site is contributed by 8 to 15 (GIDGSGKS).

This sequence belongs to the thymidylate kinase family.

It carries out the reaction dTMP + ATP = dTDP + ADP. In Pyrobaculum aerophilum (strain ATCC 51768 / DSM 7523 / JCM 9630 / CIP 104966 / NBRC 100827 / IM2), this protein is Probable thymidylate kinase.